The chain runs to 374 residues: Alcohol dehydrogenase class-3 (374 aa).

The residue at position 2 (Ala2) is an N-acetylalanine. Zn(2+) contacts are provided by Cys45, His67, Cys97, Cys100, Cys103, Cys111, and Cys174. At Lys233 the chain carries N6-succinyllysine. Ser247 is subject to Phosphoserine. Lys315 carries the post-translational modification N6-succinyllysine. Phosphoserine occurs at positions 324 and 351.

The protein belongs to the zinc-containing alcohol dehydrogenase family. Class-III subfamily. In terms of assembly, homodimer. The cofactor is Zn(2+).

The protein resides in the cytoplasm. It catalyses the reaction a primary alcohol + NAD(+) = an aldehyde + NADH + H(+). The catalysed reaction is a secondary alcohol + NAD(+) = a ketone + NADH + H(+). It carries out the reaction S-(hydroxymethyl)glutathione + NADP(+) = S-formylglutathione + NADPH + H(+). The enzyme catalyses S-(hydroxymethyl)glutathione + NAD(+) = S-formylglutathione + NADH + H(+). It catalyses the reaction 20-oxo-(5Z,8Z,11Z,14Z)-eicosatetraenoate + NAD(+) + H2O = (5Z,8Z,11Z,14Z)-eicosatetraenedioate + NADH + 2 H(+). The catalysed reaction is 20-hydroxy-(5Z,8Z,11Z,14Z)-eicosatetraenoate + NAD(+) = 20-oxo-(5Z,8Z,11Z,14Z)-eicosatetraenoate + NADH + H(+). It carries out the reaction S-nitrosoglutathione + NADH + H(+) = S-(hydroxysulfenamide)glutathione + NAD(+). In terms of biological role, catalyzes the oxidation of long-chain primary alcohols and the oxidation of S-(hydroxymethyl) glutathione. Also oxidizes long chain omega-hydroxy fatty acids, such as 20-HETE, producing both the intermediate aldehyde, 20-oxoarachidonate and the end product, a dicarboxylic acid, (5Z,8Z,11Z,14Z)-eicosatetraenedioate. Class-III ADH is remarkably ineffective in oxidizing ethanol. Required for clearance of cellular formaldehyde, a cytotoxic and carcinogenic metabolite that induces DNA damage. Also acts as a S-nitroso-glutathione reductase by catalyzing the NADH-dependent reduction of S-nitrosoglutathione, thereby regulating protein S-nitrosylation. This is Alcohol dehydrogenase class-3 from Oryctolagus cuniculus (Rabbit).